Reading from the N-terminus, the 142-residue chain is Small ribosomal subunit protein bS6 (142 aa).

Residues 110–142 are disordered; sequence NKKPSHAKEKHEKTEHAHSHHAEEAKSTESHSE.

The protein belongs to the bacterial ribosomal protein bS6 family.

In terms of biological role, binds together with bS18 to 16S ribosomal RNA. The sequence is that of Small ribosomal subunit protein bS6 from Helicobacter pylori (strain G27).